The following is a 747-amino-acid chain: Eukaryotic translation initiation factor 3 subunit B (747 aa).

Positions 42-128 (AFVVVDGLPE…HTLRVNKLTD (87 aa)) constitute an RRM domain. WD repeat units follow at residues 195-234 (DRQHWTETFVQWSPLGTYLTSVHAQGVQLWGGPSWTRQRR), 236-292 (AHPF…PLRS), 310-349 (APKFPWPAFKWSADDKYVARLNPGQSISVYELPRMNLLDK), 520-563 (LEKK…EKPE), and 578-623 (ADHY…LREE).

The protein belongs to the eIF-3 subunit B family. As to quaternary structure, component of the eukaryotic translation initiation factor 3 (eIF-3) complex.

It localises to the cytoplasm. RNA-binding component of the eukaryotic translation initiation factor 3 (eIF-3) complex, which is involved in protein synthesis of a specialized repertoire of mRNAs and, together with other initiation factors, stimulates binding of mRNA and methionyl-tRNAi to the 40S ribosome. The eIF-3 complex specifically targets and initiates translation of a subset of mRNAs involved in cell proliferation. The polypeptide is Eukaryotic translation initiation factor 3 subunit B (prt-1) (Neurospora crassa (strain ATCC 24698 / 74-OR23-1A / CBS 708.71 / DSM 1257 / FGSC 987)).